A 33-amino-acid chain; its full sequence is Cytochrome b6-f complex subunit 7 (33 aa).

A helical membrane pass occupies residues 9-29 (AVICFTLTLIGLSLGFVLLKI).

This sequence belongs to the PetM family. In terms of assembly, the 4 large subunits of the cytochrome b6-f complex are cytochrome b6, subunit IV (17 kDa polypeptide, PetD), cytochrome f and the Rieske protein, while the 4 small subunits are PetG, PetL, PetM and PetN. The complex functions as a dimer.

Its subcellular location is the plastid. It is found in the cyanelle thylakoid membrane. Its function is as follows. Component of the cytochrome b6-f complex, which mediates electron transfer between photosystem II (PSII) and photosystem I (PSI), cyclic electron flow around PSI, and state transitions. This is Cytochrome b6-f complex subunit 7 from Cyanophora paradoxa.